The following is a 453-amino-acid chain: UDP-N-acetylmuramoylalanine--D-glutamate ligase (453 aa).

120-126 contributes to the ATP binding site; it reads GSNGKST.

The protein belongs to the MurCDEF family.

It is found in the cytoplasm. It carries out the reaction UDP-N-acetyl-alpha-D-muramoyl-L-alanine + D-glutamate + ATP = UDP-N-acetyl-alpha-D-muramoyl-L-alanyl-D-glutamate + ADP + phosphate + H(+). Its pathway is cell wall biogenesis; peptidoglycan biosynthesis. Its function is as follows. Cell wall formation. Catalyzes the addition of glutamate to the nucleotide precursor UDP-N-acetylmuramoyl-L-alanine (UMA). The chain is UDP-N-acetylmuramoylalanine--D-glutamate ligase from Nitrosococcus oceani (strain ATCC 19707 / BCRC 17464 / JCM 30415 / NCIMB 11848 / C-107).